We begin with the raw amino-acid sequence, 805 residues long: Putative cation-transporting ATPase MJ1226 (805 aa).

4 consecutive transmembrane segments (helical) span residues 53–73 (SYFW…SAII), 75–95 (HWVD…VGFW), 226–246 (IGDY…AVEL), and 258–278 (FALV…LSIT). The active-site 4-aspartylphosphate intermediate is Asp311. 6 consecutive transmembrane segments (helical) span residues 615–637 (YVIY…ILIL), 641–663 (PITA…AIAY), 680–700 (ILML…LIFY), 712–734 (ELQS…VTRI), 747–769 (LLFW…GIFM), and 773–790 (GWDL…WMLI).

It belongs to the cation transport ATPase (P-type) (TC 3.A.3) family. Type IIIA subfamily.

It localises to the cell membrane. It carries out the reaction ATP + H2O = ADP + phosphate + H(+). The polypeptide is Putative cation-transporting ATPase MJ1226 (Methanocaldococcus jannaschii (strain ATCC 43067 / DSM 2661 / JAL-1 / JCM 10045 / NBRC 100440) (Methanococcus jannaschii)).